We begin with the raw amino-acid sequence, 603 residues long: MAFTSSPSYGSLNAAFWRTIFVVHCISTLVFTTISTPPEDPVKCVSGNTNCTVTNSYGAFPDRSTCRAANVAYPTTEAELISVVAAATKAGRKMRVTTRYSHSITKLACTDGTDGLLISTKFLNHTVRTDATAMTLTVESGVTLRQLIAEAAKVGLALPYAPYWWGLTVGGMMGTGAHGSSLWGKGSAVHDYVTEIRIVSPGSVNDGFAKVRVLRETTTPKEFNAAKVSLGVLGVISQVTLKLQPMFKRSLRYVMRNDSDFGDQAVTFGMKHEFADFIWLPSQGKVVYRMDDRVAVNTSGNGLLDFMPFRSQLSAALAIIRSSEETQERFRDANGKCAGATLITSTLFATSYGLTNNGMIFTGYPVIGSQNRMMSSGSCLDSLHDGLITACPWDSRIKSEFFHQTTFSIPLTQVKSFINDIKSLVKIESKSLCVLELYDGILMRYVTSSPAYLGKETEALDFDLTYYRAKDPLSPRLYEDFIEEIEQIALFKYNALPHWGKNRNLAFDGVIKKYKNVPAFLKVKESYDPMGLFSSEWTDQILGIKGNVTIIKDGCALEGLCVCSEDAHCAPTKGYFCRPGKVYKEARVCTRADDISVIQSLSY.

The signal sequence occupies residues 1–35 (MAFTSSPSYGSLNAAFWRTIFVVHCISTLVFTTIS). The FAD-binding PCMH-type domain maps to 64–246 (STCRAANVAY…SQVTLKLQPM (183 aa)).

It belongs to the oxygen-dependent FAD-linked oxidoreductase family. It depends on FAD as a cofactor.

The catalysed reaction is L-gulono-1,4-lactone + O2 = L-ascorbate + H2O2 + H(+). It functions in the pathway cofactor biosynthesis; L-ascorbate biosynthesis. May be involved in the biosynthesis of ascorbic acid. This is Probable L-gulonolactone oxidase 6 from Arabidopsis thaliana (Mouse-ear cress).